Reading from the N-terminus, the 338-residue chain is Aspartate carbamoyltransferase catalytic subunit (338 aa).

Carbamoyl phosphate-binding residues include arginine 72 and threonine 73. Lysine 100 contributes to the L-aspartate binding site. 3 residues coordinate carbamoyl phosphate: arginine 122, histidine 152, and glutamine 155. L-aspartate-binding residues include arginine 186 and arginine 243. Carbamoyl phosphate-binding residues include glycine 284 and proline 285.

The protein belongs to the aspartate/ornithine carbamoyltransferase superfamily. ATCase family. In terms of assembly, heterododecamer (2C3:3R2) of six catalytic PyrB chains organized as two trimers (C3), and six regulatory PyrI chains organized as three dimers (R2).

The enzyme catalyses carbamoyl phosphate + L-aspartate = N-carbamoyl-L-aspartate + phosphate + H(+). It participates in pyrimidine metabolism; UMP biosynthesis via de novo pathway; (S)-dihydroorotate from bicarbonate: step 2/3. Its function is as follows. Catalyzes the condensation of carbamoyl phosphate and aspartate to form carbamoyl aspartate and inorganic phosphate, the committed step in the de novo pyrimidine nucleotide biosynthesis pathway. The protein is Aspartate carbamoyltransferase catalytic subunit of Acinetobacter baumannii (strain SDF).